Reading from the N-terminus, the 377-residue chain is Flagellin (377 aa).

It belongs to the bacterial flagellin family.

It localises to the secreted. It is found in the bacterial flagellum. In terms of biological role, flagellin is the subunit protein which polymerizes to form the filaments of bacterial flagella. This chain is Flagellin (fla), found in Clostridium tyrobutyricum.